A 180-amino-acid chain; its full sequence is QDWFHGRCVTVPRLLSSQRPGFTSSPLLAWWEWDTKFLCPLCMRSRRPRLETILALLVALQRLPVRLPEGEALQCLTERAISWQGRARQVLASEEVTALLGRLAELRQRLQAESKPEESLAYSSDAGEGAGHIPKVQGLLENGDSVTSPEKVATEEGSGKRDLELLSSLLPQLTGPVLEL.

Residues 116-159 (PEESLAYSSDAGEGAGHIPKVQGLLENGDSVTSPEKVATEEGSG) are disordered. A Phosphoserine modification is found at serine 148.

It belongs to the JARID1 histone demethylase family. As to quaternary structure, part of two distinct complexes, one containing E2F6, and the other containing REST. Interacts with ZMYND8. Fe(2+) serves as cofactor.

It is found in the nucleus. It catalyses the reaction N(6),N(6),N(6)-trimethyl-L-lysyl(4)-[histone H3] + 3 2-oxoglutarate + 3 O2 = L-lysyl(4)-[histone H3] + 3 formaldehyde + 3 succinate + 3 CO2. Functionally, histone demethylase that specifically demethylates 'Lys-4' of histone H3, thereby playing a central role in histone code. Does not demethylate histone H3 'Lys-9', H3 'Lys-27', H3 'Lys-36', H3 'Lys-79' or H4 'Lys-20'. Demethylates trimethylated and dimethylated but not monomethylated H3 'Lys-4'. Participates in transcriptional repression of neuronal genes by recruiting histone deacetylases and REST at neuron-restrictive silencer elements. Represses the CLOCK-BMAL1 heterodimer-mediated transcriptional activation of the core clock component PER2. This Cricetulus griseus (Chinese hamster) protein is Lysine-specific demethylase 5C (KDM5C).